Here is a 692-residue protein sequence, read N- to C-terminus: Glycine--tRNA ligase beta subunit (692 aa).

It belongs to the class-II aminoacyl-tRNA synthetase family. In terms of assembly, tetramer of two alpha and two beta subunits.

The protein localises to the cytoplasm. The enzyme catalyses tRNA(Gly) + glycine + ATP = glycyl-tRNA(Gly) + AMP + diphosphate. This is Glycine--tRNA ligase beta subunit from Pseudoalteromonas atlantica (strain T6c / ATCC BAA-1087).